The following is a 467-amino-acid chain: Asparagine--tRNA ligase (467 aa).

Belongs to the class-II aminoacyl-tRNA synthetase family. Homodimer.

The protein localises to the cytoplasm. The catalysed reaction is tRNA(Asn) + L-asparagine + ATP = L-asparaginyl-tRNA(Asn) + AMP + diphosphate + H(+). The chain is Asparagine--tRNA ligase from Mannheimia succiniciproducens (strain KCTC 0769BP / MBEL55E).